The primary structure comprises 278 residues: MMSLAEQIEQQQDDAGWSAHLQLRFVQRDGVTRLGAWKHFGPLLVQRPFYPEGAPCHVYVLHPPGGIVAGDRLELDIHLEPGSHALLTMPGASKFYRSIGPTARLTQRFHMATGSTLEWLPQDSIFFSGARASLASRFTLEPGARLLAWETLCLGRPVMHERFDHGALDSLLHIELPDEVGLHERLRLAGGHLGKLGGHPLLATFCAAPADQAVLEQVRPLLDELGNPAGATLLGSLLVIRVLDHDNQHLQRTLQRLWHVLRPAILGLPACPPRIWAT.

The protein belongs to the UreD family. In terms of assembly, ureD, UreF and UreG form a complex that acts as a GTP-hydrolysis-dependent molecular chaperone, activating the urease apoprotein by helping to assemble the nickel containing metallocenter of UreC. The UreE protein probably delivers the nickel.

It is found in the cytoplasm. Its function is as follows. Required for maturation of urease via the functional incorporation of the urease nickel metallocenter. This is Urease accessory protein UreD from Pseudomonas putida (strain ATCC 700007 / DSM 6899 / JCM 31910 / BCRC 17059 / LMG 24140 / F1).